The primary structure comprises 220 residues: Fructose-6-phosphate aldolase (220 aa).

The active-site Schiff-base intermediate with substrate is K85.

This sequence belongs to the transaldolase family. Type 3A subfamily. Homodecamer.

It localises to the cytoplasm. It catalyses the reaction beta-D-fructose 6-phosphate = dihydroxyacetone + D-glyceraldehyde 3-phosphate. In terms of biological role, catalyzes the reversible formation of fructose 6-phosphate from dihydroxyacetone and D-glyceraldehyde 3-phosphate via an aldolization reaction. This Salmonella schwarzengrund (strain CVM19633) protein is Fructose-6-phosphate aldolase.